Reading from the N-terminus, the 678-residue chain is UvrABC system protein B (678 aa).

Residues 31-417 enclose the Helicase ATP-binding domain; it reads EGLENGLAHQ…KSGGEIIDQV (387 aa). 44–51 is an ATP binding site; the sequence is GVTGSGKT. Positions 97-120 match the Beta-hairpin motif; the sequence is YYDYYQPEAYVPSSDTFIEKDASI. In terms of domain architecture, Helicase C-terminal spans 436–589; sequence QVDDLLSEAR…QMKYNEARGI (154 aa). The UVR domain maps to 638-673; sequence QQQIKKLEQQMYKYAQDLEFEKAAAVRDQLQQLREH.

Belongs to the UvrB family. Forms a heterotetramer with UvrA during the search for lesions. Interacts with UvrC in an incision complex.

It is found in the cytoplasm. Functionally, the UvrABC repair system catalyzes the recognition and processing of DNA lesions. A damage recognition complex composed of 2 UvrA and 2 UvrB subunits scans DNA for abnormalities. Upon binding of the UvrA(2)B(2) complex to a putative damaged site, the DNA wraps around one UvrB monomer. DNA wrap is dependent on ATP binding by UvrB and probably causes local melting of the DNA helix, facilitating insertion of UvrB beta-hairpin between the DNA strands. Then UvrB probes one DNA strand for the presence of a lesion. If a lesion is found the UvrA subunits dissociate and the UvrB-DNA preincision complex is formed. This complex is subsequently bound by UvrC and the second UvrB is released. If no lesion is found, the DNA wraps around the other UvrB subunit that will check the other stand for damage. This is UvrABC system protein B from Pasteurella multocida (strain Pm70).